The primary structure comprises 330 residues: MGSISMHITPSTALPIRHFRARVSCCSSGHVSFIKDVAATEPPMHLHHLLKVLQTRGETIISPGAKQGLIPLAIPLSKNSSGSVTALLRWPTAPPGMDMPVVEVWRSGVRLIARNVDEYIHRILVEEDAQELTELYRASGEAGEKLYEKGAFAESEIDNLDVYVLKKVGLFPDLLERKVLRHFDEGDHVSAMVTGEFYTKKDLFPGFGRPFVYYANILQKVGRNVEAKDAARVALRSPWWTLGCPYEEVASIAQWEDEQIEFIREKVSDEGRFEDLHKGKAPIQVALDVAAFLLDLASIEGTWSESLNHIAKCYEEAGLHHISNFVLYTD.

A chloroplast-targeting transit peptide spans Met-1–Lys-35.

As to quaternary structure, interacts with ATPC1.

The protein resides in the plastid. The protein localises to the chloroplast stroma. Involved in the assembly of the F(1) ATP synthase in chloroplast thylakoid membranes. Functions downstream of the CPN60 chaperones to promote assembly of the catalytically active core of the chloroplast ATP synthase. Assists the assembly of the ATP synthase gamma subunit into the active F(1) core downstream of CPN60-mediated folding, which is critical for the biogenesis of the chloroplast ATP synthase. The protein is Protein IN CHLOROPLAST ATPASE BIOGENESIS, chloroplastic of Arabidopsis thaliana (Mouse-ear cress).